Here is a 311-residue protein sequence, read N- to C-terminus: Pyrimidine-specific ribonucleoside hydrolase RihA (311 aa).

Histidine 240 is a catalytic residue.

The protein belongs to the IUNH family. RihA subfamily.

In terms of biological role, hydrolyzes cytidine or uridine to ribose and cytosine or uracil, respectively. The protein is Pyrimidine-specific ribonucleoside hydrolase RihA of Salmonella paratyphi A (strain ATCC 9150 / SARB42).